We begin with the raw amino-acid sequence, 597 residues long: Elongation factor 4 (597 aa).

Positions 2-184 (QHIRNFSIIA…SIVARVPPPK (183 aa)) constitute a tr-type G domain. Residues 14 to 19 (DHGKST) and 131 to 134 (NKMD) each bind GTP.

Belongs to the TRAFAC class translation factor GTPase superfamily. Classic translation factor GTPase family. LepA subfamily.

It is found in the cell inner membrane. It catalyses the reaction GTP + H2O = GDP + phosphate + H(+). Its function is as follows. Required for accurate and efficient protein synthesis under certain stress conditions. May act as a fidelity factor of the translation reaction, by catalyzing a one-codon backward translocation of tRNAs on improperly translocated ribosomes. Back-translocation proceeds from a post-translocation (POST) complex to a pre-translocation (PRE) complex, thus giving elongation factor G a second chance to translocate the tRNAs correctly. Binds to ribosomes in a GTP-dependent manner. The protein is Elongation factor 4 of Bordetella bronchiseptica (strain ATCC BAA-588 / NCTC 13252 / RB50) (Alcaligenes bronchisepticus).